The chain runs to 285 residues: Cytosolic Fe-S cluster assembly factor CFD1 (285 aa).

Residue 30–37 (GKGGVGKS) participates in ATP binding. Residues C206 and C209 each contribute to the [4Fe-4S] cluster site.

This sequence belongs to the Mrp/NBP35 ATP-binding proteins family. NUBP2/CFD1 subfamily. In terms of assembly, heterotetramer of 2 NBP35 and 2 CFD1 chains. [4Fe-4S] cluster serves as cofactor.

The protein localises to the cytoplasm. Its function is as follows. Component of the cytosolic iron-sulfur (Fe/S) protein assembly (CIA) machinery. Required for maturation of extramitochondrial Fe-S proteins. The NBP35-CFD1 heterotetramer forms a Fe-S scaffold complex, mediating the de novo assembly of an Fe-S cluster and its transfer to target apoproteins. Required for biogenesis and export of both ribosomal subunits, which may reflect a role in assembly of the Fe/S clusters in RLI1, a protein which performs rRNA processing and ribosome export. This chain is Cytosolic Fe-S cluster assembly factor CFD1, found in Candida glabrata (strain ATCC 2001 / BCRC 20586 / JCM 3761 / NBRC 0622 / NRRL Y-65 / CBS 138) (Yeast).